We begin with the raw amino-acid sequence, 225 residues long: Testis-expressed protein 30 (225 aa).

This Mus musculus (Mouse) protein is Testis-expressed protein 30 (Tex30).